Consider the following 95-residue polypeptide: Co-chaperonin GroES (95 aa).

The span at 12–22 (VKPSPAEEKTK) shows a compositional bias: basic and acidic residues. Residues 12–38 (VKPSPAEEKTKGGLYIPDSGKEKPQHG) form a disordered region.

Belongs to the GroES chaperonin family. As to quaternary structure, heptamer of 7 subunits arranged in a ring. Interacts with the chaperonin GroEL.

The protein localises to the cytoplasm. Functionally, together with the chaperonin GroEL, plays an essential role in assisting protein folding. The GroEL-GroES system forms a nano-cage that allows encapsulation of the non-native substrate proteins and provides a physical environment optimized to promote and accelerate protein folding. GroES binds to the apical surface of the GroEL ring, thereby capping the opening of the GroEL channel. The sequence is that of Co-chaperonin GroES from Chloroherpeton thalassium (strain ATCC 35110 / GB-78).